The primary structure comprises 693 residues: Elongation factor G (693 aa).

A tr-type G domain is found at 8–282; that stretch reads EKTRNIGIMA…AVIDYLPSPL (275 aa). GTP contacts are provided by residues 17–24, 81–85, and 135–138; these read AHIDAGKT, DTPGH, and NKMD.

It belongs to the TRAFAC class translation factor GTPase superfamily. Classic translation factor GTPase family. EF-G/EF-2 subfamily.

The protein localises to the cytoplasm. In terms of biological role, catalyzes the GTP-dependent ribosomal translocation step during translation elongation. During this step, the ribosome changes from the pre-translocational (PRE) to the post-translocational (POST) state as the newly formed A-site-bound peptidyl-tRNA and P-site-bound deacylated tRNA move to the P and E sites, respectively. Catalyzes the coordinated movement of the two tRNA molecules, the mRNA and conformational changes in the ribosome. In Staphylococcus aureus (strain Mu3 / ATCC 700698), this protein is Elongation factor G.